A 594-amino-acid chain; its full sequence is Fidgetin-like protein 1 (594 aa).

Disordered stretches follow at residues 1-79 (MYSP…DDEL) and 239-261 (QSIG…KRCS). The span at 56 to 73 (PSDSAQQQPPFKSRSQQN) shows a compositional bias: polar residues. Residues Ala-319 and 359-364 (GTGKTM) contribute to the ATP site.

It belongs to the AAA ATPase family. Hexamer. Mg(2+) is required as a cofactor. Expressed in germ cells.

The protein localises to the nucleus. It carries out the reaction ATP + H2O = ADP + phosphate + H(+). In terms of biological role, has a role in spindle assembly which acts in the progression through mitosis during embryogenesis. Required for fertility. This Caenorhabditis elegans protein is Fidgetin-like protein 1 (figl-1).